The following is a 480-amino-acid chain: ATP synthase subunit beta 1 (480 aa).

An ATP-binding site is contributed by 154–161 (GGAGVGKT).

This sequence belongs to the ATPase alpha/beta chains family. As to quaternary structure, F-type ATPases have 2 components, CF(1) - the catalytic core - and CF(0) - the membrane proton channel. CF(1) has five subunits: alpha(3), beta(3), gamma(1), delta(1), epsilon(1). CF(0) has four main subunits: a(1), b(1), b'(1) and c(9-12).

It is found in the cell inner membrane. It carries out the reaction ATP + H2O + 4 H(+)(in) = ADP + phosphate + 5 H(+)(out). Functionally, produces ATP from ADP in the presence of a proton gradient across the membrane. The catalytic sites are hosted primarily by the beta subunits. The polypeptide is ATP synthase subunit beta 1 (Chlorobaculum tepidum (strain ATCC 49652 / DSM 12025 / NBRC 103806 / TLS) (Chlorobium tepidum)).